The primary structure comprises 310 residues: Small ribosomal subunit biogenesis GTPase RsgA (310 aa).

Positions 77–238 (LSKQSHILAA…IIDTPGIKGF (162 aa)) constitute a CP-type G domain. Residues 126-129 (NKTD) and 180-188 (GNSGVGKST) each bind GTP. Cysteine 262, cysteine 267, histidine 269, and cysteine 275 together coordinate Zn(2+).

Belongs to the TRAFAC class YlqF/YawG GTPase family. RsgA subfamily. In terms of assembly, monomer. Associates with 30S ribosomal subunit, binds 16S rRNA. The cofactor is Zn(2+).

The protein localises to the cytoplasm. Its function is as follows. One of several proteins that assist in the late maturation steps of the functional core of the 30S ribosomal subunit. Helps release RbfA from mature subunits. May play a role in the assembly of ribosomal proteins into the subunit. Circularly permuted GTPase that catalyzes slow GTP hydrolysis, GTPase activity is stimulated by the 30S ribosomal subunit. This is Small ribosomal subunit biogenesis GTPase RsgA from Phocaeicola vulgatus (strain ATCC 8482 / DSM 1447 / JCM 5826 / CCUG 4940 / NBRC 14291 / NCTC 11154) (Bacteroides vulgatus).